The primary structure comprises 166 residues: Phospholipase A2 inhibitor CgMIP-II (166 aa).

An N-terminal signal peptide occupies residues 1-19 (MRLILLSGLLLLGTFLANG). The 116-residue stretch at 46 to 161 (LRYALMTVHN…CDDNLLVVCE (116 aa)) folds into the C-type lectin domain. 2 disulfide bridges follow: C83–C160 and C138–C152. A glycan (N-linked (GlcNAc...) asparagine) is linked at N122.

Belongs to the alpha-type phospholipase A2 inhibitor family. In terms of assembly, homomer composed of 20-25-kDa subunits that form oligomers of 180 kDa. N-glycosylated. The glycosidic chain may contain superficial sialic acid residues. Expressed by the liver.

The protein resides in the secreted. Functionally, selectively inhibits the toxic properties of myotoxin-II from the same venom (AC P81165). Does not inhibit PLA2, anti-coagulant and lethal activities of the basic myotoxin I from the same venom (AC P0DQP6), nor the different crotoxin forms (heterodimer or subunit B alone). Does not block the enzymatic activity of crude acidic PLA2 fractions from the same venom. This Cerrophidion godmani (Porthidium godmani) protein is Phospholipase A2 inhibitor CgMIP-II.